A 494-amino-acid chain; its full sequence is UDP-N-acetylmuramoyl-L-alanyl-D-glutamate--2,6-diaminopimelate ligase (494 aa).

S32 is a UDP-N-acetyl-alpha-D-muramoyl-L-alanyl-D-glutamate binding site. Residue 112–118 (GTNGKTT) coordinates ATP. UDP-N-acetyl-alpha-D-muramoyl-L-alanyl-D-glutamate is bound by residues N153, 154-155 (TT), S181, and R189. K221 is subject to N6-carboxylysine. Residues R383, 407–410 (DNPR), G459, and E463 contribute to the meso-2,6-diaminopimelate site. Residues 407 to 410 (DNPR) carry the Meso-diaminopimelate recognition motif motif.

It belongs to the MurCDEF family. MurE subfamily. Requires Mg(2+) as cofactor. Post-translationally, carboxylation is probably crucial for Mg(2+) binding and, consequently, for the gamma-phosphate positioning of ATP.

Its subcellular location is the cytoplasm. The catalysed reaction is UDP-N-acetyl-alpha-D-muramoyl-L-alanyl-D-glutamate + meso-2,6-diaminopimelate + ATP = UDP-N-acetyl-alpha-D-muramoyl-L-alanyl-gamma-D-glutamyl-meso-2,6-diaminopimelate + ADP + phosphate + H(+). The protein operates within cell wall biogenesis; peptidoglycan biosynthesis. Functionally, catalyzes the addition of meso-diaminopimelic acid to the nucleotide precursor UDP-N-acetylmuramoyl-L-alanyl-D-glutamate (UMAG) in the biosynthesis of bacterial cell-wall peptidoglycan. In Solibacter usitatus (strain Ellin6076), this protein is UDP-N-acetylmuramoyl-L-alanyl-D-glutamate--2,6-diaminopimelate ligase.